The chain runs to 101 residues: Small ribosomal subunit protein uS14 (101 aa).

Over residues 1 to 10 (MAKNSMVERD) the composition is skewed to basic and acidic residues. The interval 1-20 (MAKNSMVERDRKRRKLAQKY) is disordered.

Belongs to the universal ribosomal protein uS14 family. In terms of assembly, part of the 30S ribosomal subunit. Contacts proteins S3 and S10.

Functionally, binds 16S rRNA, required for the assembly of 30S particles and may also be responsible for determining the conformation of the 16S rRNA at the A site. This chain is Small ribosomal subunit protein uS14, found in Halorhodospira halophila (strain DSM 244 / SL1) (Ectothiorhodospira halophila (strain DSM 244 / SL1)).